A 95-amino-acid chain; its full sequence is Aspartyl/glutamyl-tRNA(Asn/Gln) amidotransferase subunit C (95 aa).

The protein belongs to the GatC family. Heterotrimer of A, B and C subunits.

The catalysed reaction is L-glutamyl-tRNA(Gln) + L-glutamine + ATP + H2O = L-glutaminyl-tRNA(Gln) + L-glutamate + ADP + phosphate + H(+). It carries out the reaction L-aspartyl-tRNA(Asn) + L-glutamine + ATP + H2O = L-asparaginyl-tRNA(Asn) + L-glutamate + ADP + phosphate + 2 H(+). In terms of biological role, allows the formation of correctly charged Asn-tRNA(Asn) or Gln-tRNA(Gln) through the transamidation of misacylated Asp-tRNA(Asn) or Glu-tRNA(Gln) in organisms which lack either or both of asparaginyl-tRNA or glutaminyl-tRNA synthetases. The reaction takes place in the presence of glutamine and ATP through an activated phospho-Asp-tRNA(Asn) or phospho-Glu-tRNA(Gln). The chain is Aspartyl/glutamyl-tRNA(Asn/Gln) amidotransferase subunit C from Pseudomonas putida (strain W619).